The chain runs to 105 residues: Nitrogen fixation nifHD1 region GlnB-like protein 1 (105 aa).

Belongs to the P(II) protein family.

Functionally, could be involved in the regulation of nitrogen fixation. The polypeptide is Nitrogen fixation nifHD1 region GlnB-like protein 1 (glnBA) (Methanosarcina barkeri).